A 118-amino-acid polypeptide reads, in one-letter code: UPF0342 protein BT9727_0768 (118 aa).

This sequence belongs to the UPF0342 family.

The sequence is that of UPF0342 protein BT9727_0768 from Bacillus thuringiensis subsp. konkukian (strain 97-27).